A 93-amino-acid polypeptide reads, in one-letter code: Small ribosomal subunit protein uS19 (93 aa).

It belongs to the universal ribosomal protein uS19 family.

In terms of biological role, protein S19 forms a complex with S13 that binds strongly to the 16S ribosomal RNA. The chain is Small ribosomal subunit protein uS19 from Geobacter metallireducens (strain ATCC 53774 / DSM 7210 / GS-15).